Here is a 230-residue protein sequence, read N- to C-terminus: ATP-dependent dethiobiotin synthetase BioD (230 aa).

12–17 (DIGKTH) is a binding site for ATP. Threonine 16 contributes to the Mg(2+) binding site. The active site involves lysine 37. Serine 41 is a substrate binding site. Residues aspartate 52, 115-118 (EGAG), and 175-176 (SE) contribute to the ATP site. Positions 52 and 115 each coordinate Mg(2+).

The protein belongs to the dethiobiotin synthetase family. In terms of assembly, homodimer. Mg(2+) serves as cofactor.

The protein localises to the cytoplasm. It catalyses the reaction (7R,8S)-7,8-diammoniononanoate + CO2 + ATP = (4R,5S)-dethiobiotin + ADP + phosphate + 3 H(+). The protein operates within cofactor biosynthesis; biotin biosynthesis; biotin from 7,8-diaminononanoate: step 1/2. Functionally, catalyzes a mechanistically unusual reaction, the ATP-dependent insertion of CO2 between the N7 and N8 nitrogen atoms of 7,8-diaminopelargonic acid (DAPA, also called 7,8-diammoniononanoate) to form a ureido ring. The sequence is that of ATP-dependent dethiobiotin synthetase BioD from Caulobacter sp. (strain K31).